The following is a 994-amino-acid chain: Leucine-rich repeat receptor-like kinase protein FLORAL ORGAN NUMBER1 (994 aa).

Positions 1–17 (MPPTLLLLLLLLPPSLA) are cleaved as a signal peptide. LRR repeat units follow at residues 73–93 (AINL…IALL), 94–117 (DSLA…LPTL), 118–141 (PSLR…DSGG), 147–171 (FPSL…SASH), 172–194 (ARLR…SYGD), 195–219 (LAAL…LSRL), 244–268 (LGAL…LGRL), 269–292 (QRLD…LGDL), 293–316 (SSLA…LANL), 318–340 (NLKL…VAGF), 341–364 (AQLE…LGKN), 365–388 (GRLK…LCAG), 390–412 (RLEM…LGDC), 413–436 (KTLT…LFNL), 438–459 (QANM…VIGG), 460–483 (DKIG…IGNL), 484–507 (PALQ…IGNL), 509–531 (NLSR…LIRC), 533–555 (SLAA…ITSL), 556–579 (KILC…MSNM), and 581–604 (SLTT…QFLV). N-linked (GlcNAc...) asparagine glycosylation is found at N75, N98, N124, N129, and N159. The N-linked (GlcNAc...) asparagine glycan is linked to N256. An N-linked (GlcNAc...) asparagine glycan is attached at N315. An N-linked (GlcNAc...) asparagine glycan is attached at N352. N495, N509, and N514 each carry an N-linked (GlcNAc...) asparagine glycan. 2 N-linked (GlcNAc...) asparagine glycosylation sites follow: N562 and N578. N-linked (GlcNAc...) asparagine glycosylation is present at N606. The helical transmembrane segment at 647-667 (KKMLVALVAAFAAVAVAFLGA) threads the bilayer. Residues 704–978 (VKEDNIIGKG…TMREVVHMLS (275 aa)) enclose the Protein kinase domain. ATP is bound by residues 710–718 (IGKGGAGIV) and K731. Residue D828 is the Proton acceptor of the active site.

This sequence belongs to the protein kinase superfamily. Ser/Thr protein kinase family. In terms of tissue distribution, expressed in shoot apical meristem, and after transition to the reproductive phase, detected in the inflorescence and the floral meristems. Expressed uniformly throughout the meristems. Expressed also in floral organ primordia, such as the palea, lemma, lodicules, stamens, carpels and ovules.

The protein localises to the membrane. The enzyme catalyses L-seryl-[protein] + ATP = O-phospho-L-seryl-[protein] + ADP + H(+). It carries out the reaction L-threonyl-[protein] + ATP = O-phospho-L-threonyl-[protein] + ADP + H(+). In terms of biological role, receptor-like kinase protein that regulates the size of the floral meristem. The protein is Leucine-rich repeat receptor-like kinase protein FLORAL ORGAN NUMBER1 (FON1) of Oryza sativa subsp. japonica (Rice).